A 264-amino-acid chain; its full sequence is MKQYLDLLNHVMEKGSDRGDRTGTGTRSVFGYQMRFDLEEGFPVLTTKKLHLRSIIHELLWFLKGETNIRYLKENGVSIWDEWADENGDLGPVYGAQWRSWPAPDGGHIDQIANLVKGIVNNPNSRRHIVSAWNPAEVDEMALPPCHCLFQFYVADGKLSCQLYQRSADIFLGVPFNISSYALLTMMVAQVVGLKPGDFVHTLGDAHLYHNHFDQAKLQLARRPKPLPFMRIKPDVKDIFGFTFDDFELIGYEADASIKAPIAV.

Arginine 21 provides a ligand contact to dUMP. Histidine 51 contacts (6R)-5,10-methylene-5,6,7,8-tetrahydrofolate. DUMP is bound at residue 126–127; that stretch reads RR. The active-site Nucleophile is cysteine 146. DUMP is bound by residues 166–169, asparagine 177, and 207–209; these read RSAD and HLY. Aspartate 169 is a binding site for (6R)-5,10-methylene-5,6,7,8-tetrahydrofolate. Alanine 263 provides a ligand contact to (6R)-5,10-methylene-5,6,7,8-tetrahydrofolate.

The protein belongs to the thymidylate synthase family. Bacterial-type ThyA subfamily. As to quaternary structure, homodimer.

Its subcellular location is the cytoplasm. It carries out the reaction dUMP + (6R)-5,10-methylene-5,6,7,8-tetrahydrofolate = 7,8-dihydrofolate + dTMP. It participates in pyrimidine metabolism; dTTP biosynthesis. Catalyzes the reductive methylation of 2'-deoxyuridine-5'-monophosphate (dUMP) to 2'-deoxythymidine-5'-monophosphate (dTMP) while utilizing 5,10-methylenetetrahydrofolate (mTHF) as the methyl donor and reductant in the reaction, yielding dihydrofolate (DHF) as a by-product. This enzymatic reaction provides an intracellular de novo source of dTMP, an essential precursor for DNA biosynthesis. This is Thymidylate synthase from Rhizobium johnstonii (strain DSM 114642 / LMG 32736 / 3841) (Rhizobium leguminosarum bv. viciae).